The sequence spans 245 residues: UDP-2,3-diacylglucosamine hydrolase (245 aa).

Residues Asp-8, His-10, Asp-41, Asn-79, and His-114 each contribute to the Mn(2+) site. Residue 79–80 (NR) participates in substrate binding. Residues Asp-122, Ser-160, Lys-164, Lys-167, and His-195 each contribute to the substrate site. Residues His-195 and His-197 each coordinate Mn(2+).

The protein belongs to the LpxH family. It depends on Mn(2+) as a cofactor.

It localises to the cell inner membrane. The catalysed reaction is UDP-2-N,3-O-bis[(3R)-3-hydroxytetradecanoyl]-alpha-D-glucosamine + H2O = 2-N,3-O-bis[(3R)-3-hydroxytetradecanoyl]-alpha-D-glucosaminyl 1-phosphate + UMP + 2 H(+). The protein operates within glycolipid biosynthesis; lipid IV(A) biosynthesis; lipid IV(A) from (3R)-3-hydroxytetradecanoyl-[acyl-carrier-protein] and UDP-N-acetyl-alpha-D-glucosamine: step 4/6. Its function is as follows. Hydrolyzes the pyrophosphate bond of UDP-2,3-diacylglucosamine to yield 2,3-diacylglucosamine 1-phosphate (lipid X) and UMP by catalyzing the attack of water at the alpha-P atom. Involved in the biosynthesis of lipid A, a phosphorylated glycolipid that anchors the lipopolysaccharide to the outer membrane of the cell. The chain is UDP-2,3-diacylglucosamine hydrolase from Aromatoleum aromaticum (strain DSM 19018 / LMG 30748 / EbN1) (Azoarcus sp. (strain EbN1)).